A 235-amino-acid polypeptide reads, in one-letter code: Transmembrane protein 215 (235 aa).

A run of 2 helical transmembrane segments spans residues 12-32 and 40-60; these read LVVA…VSGM and IPLL…IALA. Residues 99–158 are disordered; it reads SDLESGKGSSDELAKKAGLRGKPSLQGQGELPMASSITTPTPMEEGECQSPGQSGRREET.

Its subcellular location is the membrane. In Bos taurus (Bovine), this protein is Transmembrane protein 215 (TMEM215).